The chain runs to 430 residues: MANVVVVGAQWGDEGKGKVVDIYTEYADEIVRYQGGNNAGHTLVVGEEKVVLHLIPSGVLHAGKRCVIGNGVVLDPEVFIMEVNRLKAAGRLEDDSTLLLSESLHIIMPYHKAIDIAREAKSGDKKIGTTGRGIGPCYEDKIGRRGIRLMDLIDPVAFSRKLRENLEEKNAILERLGEEPLGYNEIYRTYQDFAEILKKYMADTSLVLSKSVAAGKKLLFEGAQGTLLDVDHGTYPFVTSSSTCAGGAATGTGVSPREIHEVVGISKAYVTRVGSGPFPTELLDETGEKLRQVGGEFGATTGRPRRCGWFDAMVIRYAVRINGLTGIALTKLDVLSDFETIKVCTGYRFEGQELETLPAKLETFENCEPVYEELPGWKVDITGVRSYDQLPENAKKYVRRLEELAGCPIVMVSVGPRRDQTMMIKNPFGE.

Residues 12–18 (GDEGKGK) and 40–42 (GHT) contribute to the GTP site. Aspartate 13 (proton acceptor) is an active-site residue. The Mg(2+) site is built by aspartate 13 and glycine 40. Residues 13-16 (DEGK), 38-41 (NAGH), threonine 130, arginine 144, glutamine 224, threonine 239, and arginine 303 contribute to the IMP site. The Proton donor role is filled by histidine 41. Position 299 to 305 (299 to 305 (ATTGRPR)) interacts with substrate. GTP is bound by residues arginine 305, 331–333 (KLD), and 413–415 (SVG).

This sequence belongs to the adenylosuccinate synthetase family. Homodimer. Mg(2+) is required as a cofactor.

It localises to the cytoplasm. It carries out the reaction IMP + L-aspartate + GTP = N(6)-(1,2-dicarboxyethyl)-AMP + GDP + phosphate + 2 H(+). The protein operates within purine metabolism; AMP biosynthesis via de novo pathway; AMP from IMP: step 1/2. Plays an important role in the de novo pathway of purine nucleotide biosynthesis. Catalyzes the first committed step in the biosynthesis of AMP from IMP. The polypeptide is Adenylosuccinate synthetase (Trichlorobacter lovleyi (strain ATCC BAA-1151 / DSM 17278 / SZ) (Geobacter lovleyi)).